The sequence spans 157 residues: MVFDPRTLDQPKDISAYRDQRYQGSVRDQELALRTSCTLYVGNLSYYTKEDQVYELFGRAGDVRRVIMGLDRFKKTPCGFCFVEYYTREDAELALQNISNTRMDDRVIRADWDAGFVEGRQYGRGKHGGQVRDEYRKDYDPERGGYNRAIAQKSMVE.

MRNA is bound by residues tyrosine 17, tyrosine 40, 109 to 113 (RADWD), 120 to 124 (RQYGR), and 130 to 131 (QV). The RRM domain occupies 37 to 115 (CTLYVGNLSY…RVIRADWDAG (79 aa)).

The protein belongs to the RRM NCBP2 family. Component of the nuclear cap-binding complex (CBC), a heterodimer composed of ncbp-1 and ncbp-2 that interacts with m7GpppG-capped RNA.

The protein resides in the nucleus. In terms of biological role, component of the cap-binding complex (CBC), which binds co-transcriptionally to the 5' cap of pre-mRNAs and is involved in various processes such as pre-mRNA splicing and RNA-mediated gene silencing (RNAi). The CBC complex is involved in miRNA-mediated RNA interference and is required for primary microRNAs (miRNAs) processing. In the CBC complex, ncbp-2 recognizes and binds capped RNAs (m7GpppG-capped RNA) but requires ncbp-1 to stabilize the movement of its N-terminal loop and lock the CBC into a high affinity cap-binding state with the cap structure. This chain is Nuclear cap-binding protein subunit 2 (ncbp-2), found in Caenorhabditis briggsae.